A 270-amino-acid polypeptide reads, in one-letter code: Phosphatidylglycerol--prolipoprotein diacylglyceryl transferase (270 aa).

4 helical membrane-spanning segments follow: residues 19–39 (FPVYWYGIIIGTGVLLGLWLA), 56–76 (LVLIAVPIAILFARMYYVIFE), 92–112 (QGGLAIHGGLIGAVITGILFA), and 116–136 (GVSFWKLADIAAPSILLGQAI). Residue Arg-138 participates in a 1,2-diacyl-sn-glycero-3-phospho-(1'-sn-glycerol) binding. Helical transmembrane passes span 178-198 (HPTFLYESLWNFAGVILLLAL), 206-226 (GELFFTYLIWYSIGRFFVEGL), and 236-256 (LRIAQVMSIGLVVISIIFIIV).

The protein belongs to the Lgt family.

The protein resides in the cell membrane. It carries out the reaction L-cysteinyl-[prolipoprotein] + a 1,2-diacyl-sn-glycero-3-phospho-(1'-sn-glycerol) = an S-1,2-diacyl-sn-glyceryl-L-cysteinyl-[prolipoprotein] + sn-glycerol 1-phosphate + H(+). The protein operates within protein modification; lipoprotein biosynthesis (diacylglyceryl transfer). Its function is as follows. Catalyzes the transfer of the diacylglyceryl group from phosphatidylglycerol to the sulfhydryl group of the N-terminal cysteine of a prolipoprotein, the first step in the formation of mature lipoproteins. The sequence is that of Phosphatidylglycerol--prolipoprotein diacylglyceryl transferase from Bacillus cereus (strain ZK / E33L).